The primary structure comprises 203 residues: Shikimate kinase (203 aa).

32–37 (GAGKTA) lines the ATP pocket. A Mg(2+)-binding site is contributed by Thr-36. Positions 54, 78, and 100 each coordinate substrate. Arg-138 is a binding site for ATP. Arg-157 contributes to the substrate binding site.

This sequence belongs to the shikimate kinase family. As to quaternary structure, monomer. Requires Mg(2+) as cofactor.

The protein resides in the cytoplasm. It catalyses the reaction shikimate + ATP = 3-phosphoshikimate + ADP + H(+). Its pathway is metabolic intermediate biosynthesis; chorismate biosynthesis; chorismate from D-erythrose 4-phosphate and phosphoenolpyruvate: step 5/7. Catalyzes the specific phosphorylation of the 3-hydroxyl group of shikimic acid using ATP as a cosubstrate. This chain is Shikimate kinase, found in Mesorhizobium japonicum (strain LMG 29417 / CECT 9101 / MAFF 303099) (Mesorhizobium loti (strain MAFF 303099)).